The chain runs to 352 residues: Nicotinate-nucleotide--dimethylbenzimidazole phosphoribosyltransferase (352 aa).

Residue E316 is the Proton acceptor of the active site.

This sequence belongs to the CobT family.

It catalyses the reaction 5,6-dimethylbenzimidazole + nicotinate beta-D-ribonucleotide = alpha-ribazole 5'-phosphate + nicotinate + H(+). The protein operates within nucleoside biosynthesis; alpha-ribazole biosynthesis; alpha-ribazole from 5,6-dimethylbenzimidazole: step 1/2. Catalyzes the synthesis of alpha-ribazole-5'-phosphate from nicotinate mononucleotide (NAMN) and 5,6-dimethylbenzimidazole (DMB). This is Nicotinate-nucleotide--dimethylbenzimidazole phosphoribosyltransferase from Clostridium acetobutylicum (strain ATCC 824 / DSM 792 / JCM 1419 / IAM 19013 / LMG 5710 / NBRC 13948 / NRRL B-527 / VKM B-1787 / 2291 / W).